We begin with the raw amino-acid sequence, 405 residues long: Maintenance of mitochondrial morphology protein 1 (405 aa).

Topologically, residues 1–86 (MQVLNFYVNP…TGSTKSFTQG (86 aa)) are lumenal. A helical transmembrane segment spans residues 87-107 (LIIGQLSVIILLGIFIKFFVF). The Cytoplasmic segment spans residues 108-405 (ADSSTTSSTS…QPVSTTESDH (298 aa)). An SMP-LTD domain is found at 166 to 385 (APESLDWFNV…EPRFQVVKLP (220 aa)). Positions 303–324 (SEPRVAMDSPQSTRDDNSEEPN) are disordered.

Belongs to the MMM1 family. As to quaternary structure, homodimer. Component of the ER-mitochondria encounter structure (ERMES) or MDM complex, composed of MMM1, MDM10, MDM12 and MDM34. An MMM1 homodimer associates with one molecule of MDM12 on each side in a pairwise head-to-tail manner, and the SMP-LTD domains of MMM1 and MDM12 generate a continuous hydrophobic tunnel for phospholipid trafficking.

It is found in the endoplasmic reticulum membrane. Component of the ERMES/MDM complex, which serves as a molecular tether to connect the endoplasmic reticulum (ER) and mitochondria. Components of this complex are involved in the control of mitochondrial shape and protein biogenesis, and function in nonvesicular lipid trafficking between the ER and mitochondria. The MDM12-MMM1 subcomplex functions in the major beta-barrel assembly pathway that is responsible for biogenesis of all outer membrane beta-barrel proteins, and acts in a late step after the SAM complex. The MDM10-MDM12-MMM1 subcomplex further acts in the TOM40-specific pathway after the action of the MDM12-MMM1 complex. Essential for establishing and maintaining the structure of mitochondria and maintenance of mtDNA nucleoids. The sequence is that of Maintenance of mitochondrial morphology protein 1 from Meyerozyma guilliermondii (strain ATCC 6260 / CBS 566 / DSM 6381 / JCM 1539 / NBRC 10279 / NRRL Y-324) (Yeast).